The sequence spans 154 residues: Deoxyuridine 5'-triphosphate nucleotidohydrolase (154 aa).

Substrate is bound by residues 64 to 66, Asn-77, 81 to 83, and Lys-91; these read RSG and TID.

The protein belongs to the dUTPase family. In terms of assembly, homotrimer. The cofactor is Mg(2+).

It catalyses the reaction dUTP + H2O = dUMP + diphosphate + H(+). It participates in pyrimidine metabolism; dUMP biosynthesis; dUMP from dCTP (dUTP route): step 2/2. This enzyme is involved in nucleotide metabolism: it produces dUMP, the immediate precursor of thymidine nucleotides and it decreases the intracellular concentration of dUTP so that uracil cannot be incorporated into DNA. The sequence is that of Deoxyuridine 5'-triphosphate nucleotidohydrolase from Mycobacterium sp. (strain JLS).